A 581-amino-acid polypeptide reads, in one-letter code: Pyridine nucleotide-disulfide oxidoreductase domain-containing protein 2 (581 aa).

Position 38–71 (38–71 (VVIGAGHNGLVAAAYLQRLGVNTAVFERRHVIGG)) interacts with FAD.

It belongs to the carotenoid/retinoid oxidoreductase family. In terms of assembly, interacts with COX5B; this interaction may contribute to localize PYROXD2 to the inner face of the inner mitochondrial membrane.

It localises to the mitochondrion matrix. Its function is as follows. Probable oxidoreductase that may play a role as regulator of mitochondrial function. In Rattus norvegicus (Rat), this protein is Pyridine nucleotide-disulfide oxidoreductase domain-containing protein 2.